We begin with the raw amino-acid sequence, 391 residues long: MAAPEAPVKYVGICKDSAAFKLMKSMGWEEGEGLGKDKQGIKGYVRVTNKQDTSGVGLDKPNPWAFDTTQFDNILKKLKVQAAPTKTSKNDDDSDKEDESEDDAVKSEPAKLKTVAKVTRPQGRYKRREKGKLVNSYSSKDLEGILVKRTEDPSPAVCDIADSMDIEIISEDQDASIKEQKIEEPSSNWWGFKSGFVSGGLLGAKSGKKKLKASERKMFSENDQENLYNMVQDKATAGKQGLGIKDRPKKIAGVRYEGKKTSFDNSDDDDDDDDDDDEEDEEEDEDESEADDDDKDSVIESSLPAKRKHDEIIEPKIKLKNLCKQIVKKDAGKGGFMKLKQLKSLIDEQAPSVLSEFSSRKDAIAYLKLKLERSGKFVVEGKKISLVSSKK.

One can recognise a G-patch domain in the interval 15–61; it reads KDSAAFKLMKSMGWEEGEGLGKDKQGIKGYVRVTNKQDTSGVGLDKP. 2 disordered regions span residues 80–132 and 212–307; these read VQAA…EKGK and KASE…PAKR. Composition is skewed to acidic residues over residues 92-102 and 265-295; these read DDSDKEDESED and NSDD…DDDK. Residues 305-312 carry the Nuclear localization signal motif; sequence AKRKHDEI.

Strongly expressed in tissues with high cell proliferation activity that have a high demand for ribosome production such as shoot tips, leaves primordia, root tips and floral buds.

The protein resides in the nucleus. Its subcellular location is the nucleolus. In terms of biological role, involved in ribosome biogenesis, required for normal progression of rRNA processing. Seems to promote cell proliferation in leaves. This is G-patch domain-containing protein 1 from Arabidopsis thaliana (Mouse-ear cress).